Here is a 153-residue protein sequence, read N- to C-terminus: UPF0756 membrane protein BCB4264_A4705 (153 aa).

4 helical membrane passes run 8–28 (FLFI…TVAI), 54–74 (LGVT…EIGF), 87–107 (WIAL…VQLL), and 117–137 (LVFG…GPLI).

Belongs to the UPF0756 family.

It is found in the cell membrane. The sequence is that of UPF0756 membrane protein BCB4264_A4705 from Bacillus cereus (strain B4264).